The primary structure comprises 1116 residues: ELKS/Rab6-interacting/CAST family member 1 (1116 aa).

The disordered stretch occupies residues 1-54 (MYGSARSVGKVEPSSQSPGRSPRLPRSPRLGHRRTNSTGGSSGSSVGGGSGKTL). At lysine 10 the chain carries N6-acetyllysine. The segment covering 13–28 (PSSQSPGRSPRLPRSP) has biased composition (low complexity). Phosphoserine is present on residues serine 17, serine 21, and serine 37. At threonine 38 the chain carries Phosphothreonine. Over residues 40–51 (GSSGSSVGGGSG) the composition is skewed to gly residues. Residues serine 55, serine 75, and serine 94 each carry the phosphoserine modification. Residues 144–988 (RQARDNTIMD…RMKLMADNYE (845 aa)) are a coiled coil. Basic and acidic residues predominate over residues 590-602 (KEKQMSSLKERVK). Disordered regions lie at residues 590–609 (KEKQ…ADTT) and 814–836 (ARRR…RKKD). Serine 1005 carries the post-translational modification Phosphoserine. A Phosphothreonine modification is found at threonine 1046. An FIP-RBD domain is found at 1046-1108 (TPPASYNLDD…DHCPDILEQV (63 aa)). The stretch at 1060–1100 (WENELQKMTRGQLQDELEKGERDNAELQEFANAILQQIADH) forms a coiled coil.

In terms of assembly, part of a complex with CHUK, IKBKB and IKBKG. Interacts with CHUK, IKBKB and IKBKG. The interaction with IKBKG is independent of CHUK and IKBKB. Interacts with NFKBIA. Isoform 4 interacts with PPFIA1, and through its C-terminus with the PDZ domains of RIMS1 and RIMS2. Interacts with ERC2/CAST1. Interacts with the GTB-bound forms of RAB6A isoform 1 and isoform 2 and with RAB6B. The interaction was strongest with RAB6B, followed by RAB6A isoform 2 and weakest with RAB6A isoform 1. Interacts with SDCCAG8. Part of a cortical microtubule stabilization complex (CMSC) composed of KANK1, PPFIA1, PPFIBP1, ERC1/ELKS, PHLDB2/LL5beta, CLASPs, KIF21A and possibly additional interactors; within CMSCs KANK1 and PHLDB2/LL5beta appear to be the core components for targeting of microtubule-binding proteins KIF21A and CLASPs, whereas PPFIA1, PPFIBP1 and ERC1/ELKS serve as scaffolds for protein clustering. As to expression, widely expressed. Isoform 2 and isoform 4 are abundantly expressed in brain. Isoform 1 and isoform 3 are predominantly expressed in testis and thyroid, and isoform 1 predominates in other tissues tested.

It localises to the cytoplasm. The protein resides in the cytoskeleton. The protein localises to the microtubule organizing center. It is found in the centrosome. Its subcellular location is the membrane. It localises to the golgi apparatus membrane. The protein resides in the presynaptic cell membrane. The protein localises to the cell projection. It is found in the podosome. Functionally, regulatory subunit of the IKK complex. Probably recruits IkappaBalpha/NFKBIA to the complex. May be involved in the organization of the cytomatrix at the nerve terminals active zone (CAZ) which regulates neurotransmitter release. May be involved in vesicle trafficking at the CAZ. May be involved in Rab-6 regulated endosomes to Golgi transport. The sequence is that of ELKS/Rab6-interacting/CAST family member 1 (ERC1) from Homo sapiens (Human).